The primary structure comprises 194 residues: Phosphoheptose isomerase (194 aa).

The region spanning 37–194 is the SIS domain; the sequence is ISNSFKQGGK…LIEFEMAKQA (158 aa). 52 to 54 lines the substrate pocket; it reads NGG. Residues histidine 61 and glutamate 65 each coordinate Zn(2+). Substrate is bound by residues glutamate 65, 93-94, 119-121, serine 124, and glutamine 172; these read ND and STS. Positions 172 and 180 each coordinate Zn(2+).

Belongs to the SIS family. GmhA subfamily. Homotetramer. The cofactor is Zn(2+).

It is found in the cytoplasm. It carries out the reaction 2 D-sedoheptulose 7-phosphate = D-glycero-alpha-D-manno-heptose 7-phosphate + D-glycero-beta-D-manno-heptose 7-phosphate. Its pathway is carbohydrate biosynthesis; D-glycero-D-manno-heptose 7-phosphate biosynthesis; D-glycero-alpha-D-manno-heptose 7-phosphate and D-glycero-beta-D-manno-heptose 7-phosphate from sedoheptulose 7-phosphate: step 1/1. Its function is as follows. Catalyzes the isomerization of sedoheptulose 7-phosphate in D-glycero-D-manno-heptose 7-phosphate. This is Phosphoheptose isomerase from Haemophilus influenzae (strain 86-028NP).